The sequence spans 262 residues: Hydroxyethylthiazole kinase (262 aa).

Residue M41 coordinates substrate. Residues R117 and S163 each coordinate ATP. Substrate is bound at residue G190.

The protein belongs to the Thz kinase family. It depends on Mg(2+) as a cofactor.

It catalyses the reaction 5-(2-hydroxyethyl)-4-methylthiazole + ATP = 4-methyl-5-(2-phosphooxyethyl)-thiazole + ADP + H(+). The protein operates within cofactor biosynthesis; thiamine diphosphate biosynthesis; 4-methyl-5-(2-phosphoethyl)-thiazole from 5-(2-hydroxyethyl)-4-methylthiazole: step 1/1. Its function is as follows. Catalyzes the phosphorylation of the hydroxyl group of 4-methyl-5-beta-hydroxyethylthiazole (THZ). This is Hydroxyethylthiazole kinase from Levilactobacillus brevis (strain ATCC 367 / BCRC 12310 / CIP 105137 / JCM 1170 / LMG 11437 / NCIMB 947 / NCTC 947) (Lactobacillus brevis).